Here is a 238-residue protein sequence, read N- to C-terminus: U2 small nuclear ribonucleoprotein A' (238 aa).

LRR repeat units follow at residues 53-74 (PTHI…SRRD), 75-95 (DIHT…RLLP), and 97-118 (NVQN…QRLR). Residues 132-170 (NQVCHLANYREHVLRLVPHLETLDFQNVTAEERKSAMSF) enclose the LRRCT domain. Positions 167 to 189 (AMSFPRQADGDTLGPVNTAIRDN) are disordered.

The protein belongs to the U2 small nuclear ribonucleoprotein A family. As to quaternary structure, belongs to the CWC complex (or CEF1-associated complex), a spliceosome sub-complex reminiscent of a late-stage spliceosome composed of the U2, U5 and U6 snRNAs and at least BUD13, BUD31, BRR2, CDC40, CEF1, CLF1, CUS1, CWC2, CWC15, CWC21, CWC22, CWC23, CWC24, CWC25, CWC27, ECM2, HSH155, IST3, ISY1, LEA1, MSL1, NTC20, PRP8, PRP9, PRP11, PRP19, PRP21, PRP22, PRP45, PRP46, SLU7, SMB1, SMD1, SMD2, SMD3, SMX2, SMX3, SNT309, SNU114, SPP2, SYF1, SYF2, RSE1 and YJU2. Interacts with MSL1.

The protein localises to the nucleus. Involved in pre-mRNA splicing. Associates to U2 snRNA in a MSL1 dependent manner and is required for normal accumulation of U2 snRNA. Required for the spliceosome assembly and the efficient addition of U2 snRNP onto the pre-mRNA. This is U2 small nuclear ribonucleoprotein A' (LEA1) from Saccharomyces cerevisiae (strain ATCC 204508 / S288c) (Baker's yeast).